The chain runs to 634 residues: MAKVIGIDLGTTNSCVAVMEGDKVKVIENSEGKRTTPSIVAITEEGEVLVGEAAKRQAVTNPENTVYEVKRLIGRKFDDAEVQKDLKHVPYKVIKADNGDAWVEVRDKKYSAQQISAFILQKMKKTAEDYLGEKVTEAVITVPAYFNDAQRQATKDAGRIAGLEVKRIINEPTAAALAFGEDKKPGDSKIAVYDLGGGTFDISIIEIAEMEGEHQFEVLSTNGDTFLGGGDFDSRVINYLADSFKAESGIDLRGDRLAMQRLKEAAEKAKIELSSAQQTDVNLPFITADQSGPKHLNMKLTRAKLESLVEDLIDRSMAPCRVAMKDANLATSRITDVILVGGQSRMPKVQEKVKDFFGQDPRKDVNPDEAVAIGAAIQGAVLSGEKKDVLLMDVTPLSLGIETLGGVMTKLIEKNTTIPTRKSQIFSTAEDNQSAVTVHVLQGERELARDNKSLARFDLTDIANAPRGMPQIEVTFDIDANGILHVSAKDNQTGKEQSIKITASSGLSEEEIKRMIQEAEAHAADDKKARALIEARNEADASVHGARKAVEEHAAAPEHDKTKVTEAISAVENAAKGEDVEAIKGAVATLMAAMSALLQSAAAGQAQAESGAGAQGNAKPDDVVDAEFEEVDKK.

Position 199 is a phosphothreonine; by autocatalysis (Thr-199). The segment covering 601–618 (AAAGQAQAESGAGAQGNA) has biased composition (low complexity). The segment at 601–634 (AAAGQAQAESGAGAQGNAKPDDVVDAEFEEVDKK) is disordered. Positions 623–634 (VVDAEFEEVDKK) are enriched in acidic residues.

Belongs to the heat shock protein 70 family.

Functionally, acts as a chaperone. The protein is Chaperone protein DnaK of Acidithiobacillus ferrooxidans (strain ATCC 23270 / DSM 14882 / CIP 104768 / NCIMB 8455) (Ferrobacillus ferrooxidans (strain ATCC 23270)).